A 125-amino-acid chain; its full sequence is Large ribosomal subunit protein bL20 (125 aa).

It belongs to the bacterial ribosomal protein bL20 family.

Its function is as follows. Binds directly to 23S ribosomal RNA and is necessary for the in vitro assembly process of the 50S ribosomal subunit. It is not involved in the protein synthesizing functions of that subunit. This chain is Large ribosomal subunit protein bL20, found in Methylobacterium radiotolerans (strain ATCC 27329 / DSM 1819 / JCM 2831 / NBRC 15690 / NCIMB 10815 / 0-1).